Here is a 58-residue protein sequence, read N- to C-terminus: uncharacterized protein (58 aa).

The chain crosses the membrane as a helical span at residues 24–44; it reads LSVYLGLATTIVCIVLFFTML.

It localises to the membrane. This is an uncharacterized protein from Haemophilus influenzae (strain ATCC 51907 / DSM 11121 / KW20 / Rd).